A 480-amino-acid chain; its full sequence is Glutamate--tRNA ligase 2 (480 aa).

The 'HIGH' region signature appears at 15-25; sequence PSPTGYLHVGG. The 'KMSKS' region motif lies at 248–252; it reads RLSKR. Residue Lys251 participates in ATP binding.

This sequence belongs to the class-I aminoacyl-tRNA synthetase family. Glutamate--tRNA ligase type 1 subfamily. As to quaternary structure, monomer.

The protein resides in the cytoplasm. It carries out the reaction tRNA(Glu) + L-glutamate + ATP = L-glutamyl-tRNA(Glu) + AMP + diphosphate. Functionally, catalyzes the attachment of glutamate to tRNA(Glu) in a two-step reaction: glutamate is first activated by ATP to form Glu-AMP and then transferred to the acceptor end of tRNA(Glu). This is Glutamate--tRNA ligase 2 from Koribacter versatilis (strain Ellin345).